Here is a 613-residue protein sequence, read N- to C-terminus: Ectonucleoside triphosphate diphosphohydrolase 4 (613 aa).

The Cytoplasmic segment spans residues 1 to 33 (MGRIGISCLFPASWHFSISPVGCPRILNTNLRQ). Residues 34-54 (IVVISILAAAVSLLYFSVVII) traverse the membrane as a helical segment. Residues 55 to 559 (RSKYGWLSKD…AGHAHWRGVS (505 aa)) are Lumenal-facing. Glutamate 222 (proton acceptor) is an active-site residue. An intrachain disulfide couples cysteine 368 to cysteine 395. Residues asparagine 404 and asparagine 407 are each glycosylated (N-linked (GlcNAc...) asparagine). Cysteine 461 and cysteine 490 form a disulfide bridge. Residues 560–580 (FVYNHYLFSGCFLVVLLSILL) form a helical membrane-spanning segment. At 581 to 613 (YLLRLRRIHRRAPRTGSLWMEEGLPSQKGPGPL) the chain is on the cytoplasmic side.

It belongs to the GDA1/CD39 NTPase family. Ca(2+) is required as a cofactor. It depends on Mg(2+) as a cofactor. In terms of tissue distribution, ubiquitous.

It localises to the cytoplasmic vesicle. The protein localises to the autophagosome membrane. It is found in the lysosome membrane. Its subcellular location is the golgi apparatus membrane. It catalyses the reaction a ribonucleoside 5'-triphosphate + H2O = a ribonucleoside 5'-diphosphate + phosphate + H(+). The enzyme catalyses a ribonucleoside 5'-diphosphate + H2O = a ribonucleoside 5'-phosphate + phosphate + H(+). It carries out the reaction UDP + H2O = UMP + phosphate + H(+). The catalysed reaction is UTP + H2O = UDP + phosphate + H(+). It catalyses the reaction CTP + H2O = CDP + phosphate + H(+). The enzyme catalyses GDP + H2O = GMP + phosphate + H(+). It carries out the reaction 5-methyl-UTP + H2O = 5-methyl-UDP + phosphate + H(+). Functionally, catalyzes the hydrolysis of nucleoside triphosphates and diphosphates in a calcium- or magnesium-dependent manner, with a preference for pyrimidines. Preferentially hydrolyzes UTP and TTP on UTP and TTP. AMP, ADP, ATP and UMP are not substrates. Preferentially activated by Ca(2+) over Mg(2+). Has a broad substrate specificity with the ability of cleaving all nucleotide di- and triphosphates with the exception of adenosine di- and triphosphate (ADP and ATP). Preferentially hydrolyzes CTP, UDP, CDP, GTP and GDP. Can use either Ca(2+) or Mg(2+) equally. This is Ectonucleoside triphosphate diphosphohydrolase 4 (Entpd4) from Mus musculus (Mouse).